Consider the following 1158-residue polypeptide: Rho1 guanine nucleotide exchange factor 2 (1158 aa).

The interval Arg42 to Gly141 is disordered. The span at Gly45–Asn63 shows a compositional bias: polar residues. Positions Phe68–Leu81 are enriched in low complexity. Residues Lys97 to Asp108 show a composition bias toward polar residues. The segment covering Ser132–Gly141 has biased composition (low complexity). Positions Lys447–Glu634 constitute a DH domain. In terms of domain architecture, PH spans Leu670–Ile805. 2 positions are modified to phosphoserine: Ser746 and Ser747. The CNH domain maps to Gly825 to Ile1120.

It is found in the cytoplasm. Stimulates the exchange of Rho1 and Rho5 GDP-bound form into GTP-bound form. Controls septum formation, cell wall synthesis and localization of F-actin patches. This chain is Rho1 guanine nucleotide exchange factor 2 (rgf2), found in Schizosaccharomyces pombe (strain 972 / ATCC 24843) (Fission yeast).